Here is a 317-residue protein sequence, read N- to C-terminus: Transcription factor EC (317 aa).

A necessary for transcriptional transactivation region spans residues 1-90 (MTLDHRLFSQ…GLMNASCPSI (90 aa)). The region spanning 110 to 163 (QKKDNHNLIERRRRYNINYRIKELGTLIPKSNDPDIRWNKGTILKASVDYIKWL) is the bHLH domain. A necessary for transcriptional transactivation region spans residues 242-317 (TSPEFYEQAV…SLSSEDGDEL (76 aa)).

Belongs to the MiT/TFE family. In terms of assembly, homodimer. Forms heterodimers with TFE3. Forms heterodimers with MITF. Interacts with MITF. As to expression, expressed in kidney, spleen, lung, liver, testis and muscle.

Its subcellular location is the nucleus. In terms of biological role, transcriptional regulator that acts as a repressor or an activator. Acts as a transcriptional repressor on minimal promoter containing mu E3 enhancer sequence. Binds to mu E3 DNA sequence of the immunoglobulin heavy-chain gene enhancer. Acts as a transcriptional transactivator on the proximal promoter region of the tartrate-resistant acid phosphatase (TRAP) E-box containing promoter. Collaborates with MITF in target gene activation. Acts as a transcriptional repressor on minimal promoter containing mu E3 enhancer sequence. Binds to mu E3 DNA sequence of the immunoglobulin heavy-chain gene enhancer. Binds DNA in a homo- or heterodimeric form. This Rattus norvegicus (Rat) protein is Transcription factor EC (Tfec).